Here is a 223-residue protein sequence, read N- to C-terminus: MSATYQLALQQLTDSALPTGAFAHSLGFESYIHRGLVRDESTFSTWLQAFVSQQLSYSDGLALRFLFEGVDVGLLDGVLSAQLLAREVREASLKMGGRLLEIGGEVFPSAELEAYRGLVRAGSASGHQPLAFGVIARSLGVPLEEALSAYLFATVTSLTQNAVRAIPLGQNAGQRVLRQAHDAVAAAIHVVAQLCWDDFGAVSPGLEISQMRHERQRARMFMS.

It belongs to the UreF family. In terms of assembly, ureD, UreF and UreG form a complex that acts as a GTP-hydrolysis-dependent molecular chaperone, activating the urease apoprotein by helping to assemble the nickel containing metallocenter of UreC. The UreE protein probably delivers the nickel.

The protein localises to the cytoplasm. Its function is as follows. Required for maturation of urease via the functional incorporation of the urease nickel metallocenter. This chain is Urease accessory protein UreF, found in Paenarthrobacter aurescens (strain TC1).